The following is a 126-amino-acid chain: Actin-depolymerizing factor (126 aa).

The ADF-H domain occupies 1-126 (EDNCKLKFLE…SFDIIKSRAL (126 aa)).

This sequence belongs to the actin-binding proteins ADF family. Preferentially in mature anther.

Functionally, actin-depolymerizing protein. Severs actin filaments (F-actin) and binds to actin monomers. In Brassica napus (Rape), this protein is Actin-depolymerizing factor.